A 523-amino-acid chain; its full sequence is Asc-type amino acid transporter 1 (523 aa).

Residues 1–28 are disordered; it reads MAGHTQQPSGRGNPRPAPSPSPVPGTVP. Residues 15–25 are compositionally biased toward pro residues; that stretch reads RPAPSPSPVPG. 9 helical membrane-spanning segments follow: residues 40-60, 72-92, 113-133, 268-288, 310-330, 362-382, 388-408, 424-444, and 448-468; these read IGLL…GIFI, VGLA…GSLC, IFGG…MYPT, AIFI…IAYF, LLGY…FGGI, CTPI…MLVG, INYV…GLLL, LLIP…SFIS, and VCGV…LGVF. The segment at 499–523 is disordered; the sequence is APEEEENGPCPPSLLPATDKPSKPQ.

Belongs to the amino acid-polyamine-organocation (APC) superfamily. In terms of assembly, disulfide-linked heterodimer with the amino acid transport protein SLC3A2/4F2hc. As to expression, expressed in brain, heart, kidney, liver, lung, pancreas, placenta, and skeletal muscle.

It localises to the cell membrane. The enzyme catalyses L-alanine(in) + glycine(out) = L-alanine(out) + glycine(in). The catalysed reaction is L-serine(out) + L-alanine(in) = L-serine(in) + L-alanine(out). It carries out the reaction L-threonine(out) + L-alanine(in) = L-threonine(in) + L-alanine(out). It catalyses the reaction L-cysteine(out) + L-alanine(in) = L-cysteine(in) + L-alanine(out). The enzyme catalyses 2-aminoisobutanoate(out) + L-alanine(in) = 2-aminoisobutanoate(in) + L-alanine(out). The catalysed reaction is D-serine(out) + L-alanine(in) = D-serine(in) + L-alanine(out). It carries out the reaction D-alanine(out) + L-alanine(in) = D-alanine(in) + L-alanine(out). It catalyses the reaction L-valine(out) + L-alanine(in) = L-valine(in) + L-alanine(out). The enzyme catalyses L-methionine(out) + L-alanine(in) = L-methionine(in) + L-alanine(out). The catalysed reaction is beta-alanine(out) + L-alanine(in) = beta-alanine(in) + L-alanine(out). It carries out the reaction D-cysteine(out) + L-alanine(in) = D-cysteine(in) + L-alanine(out). It catalyses the reaction D-threonine(out) + L-alanine(in) = D-threonine(in) + L-alanine(out). The enzyme catalyses D-isoleucine(out) + D-serine(in) = D-isoleucine(in) + D-serine(out). The catalysed reaction is D-serine(in) = D-serine(out). Its function is as follows. Associates with SLC3A2/4F2hc to form a functional heterodimeric complex that translocates small neutral L- and D-amino acids across the plasma membrane. Preferentially mediates exchange transport, but can also operate via facilitated diffusion. Acts as a major transporter for glycine, L- and D-serine in the central nervous system. At the spinal cord and brainstem regulates glycine metabolism and glycinergic inhibitory neurotransmission by providing for glycine de novo synthesis from L-serine and glycine recycling from astrocytes to glycinergic motor neurons. At Schaffer collateral-CA1 synapses mediates D-serine and glycine release that modulates post-synaptic activation of NMDA receptors and excitatory glutamatergic transmission. May regulate D-serine release from mesenchymal progenitors located in developing subcutaneous adipose tissue, favoring white adipocyte over thermogenic beige adipocyte lineage commitment. The sequence is that of Asc-type amino acid transporter 1 (SLC7A10) from Homo sapiens (Human).